Consider the following 399-residue polypeptide: N-acetylglucosamine-6-phosphate deacetylase (399 aa).

The a divalent metal cation site is built by H65, H67, and E135. 146–147 (AH) contacts substrate. 2 residues coordinate a divalent metal cation: H201 and H222. Substrate contacts are provided by residues 225 to 226 (NG), R233, and 254 to 257 (DGHH). D279 provides a ligand contact to a divalent metal cation. D279 serves as the catalytic Proton donor/acceptor. Substrate is bound at residue 312 to 314 (LAG).

It belongs to the metallo-dependent hydrolases superfamily. NagA family. Homodimer. It depends on a divalent metal cation as a cofactor.

It carries out the reaction N-acetyl-D-glucosamine 6-phosphate + H2O = D-glucosamine 6-phosphate + acetate. The protein operates within amino-sugar metabolism; N-acetylneuraminate degradation; D-fructose 6-phosphate from N-acetylneuraminate: step 4/5. In terms of biological role, involved in the first committed step in the biosynthesis of amino-sugar-nucleotides. Catalyzes the hydrolysis of the N-acetyl group of N-acetylglucosamine-6-phosphate (GlcNAc-6-P) to yield glucosamine 6-phosphate and acetate. This Vibrio furnissii protein is N-acetylglucosamine-6-phosphate deacetylase (manD).